A 464-amino-acid polypeptide reads, in one-letter code: MTVVSVEHALAGKIPEGGEVTVRGWVRTLRGSAGLAFINVTDGSCFAPIQVVATDTLPNFDEIKRLTSGCSLIAKGVLVKSQGKGQSFEIQASGVEIVGWVEDPLTYPIQPKPMSPEFLREVAHLRPRTNLFGAVTRIRNCLAQAVHRFFHQNGFNWISTPIITTSDAEGAGQMFRVSSLDMVNLPRTAQGEVDFSRDFFGKETFLTVSGQLNVEAYCLALSKVYTFGPTFRAENSHTTRHLAEFWMIEPEIAFADLAEDARLAEQFLKYLFRAVLDERGDDLAFLAERVDKNAISKLEAFINAPFEQIDYTEAVKLLQNSGKKFDFPVEWGLDLQTEHERWLTEEHIGRPVVVTNYPEHIKAFYMRLNDDGKTVAAMDVLAPGIGEIIGGSQREERLDVLDARMAQFGLDKEHYSWYRDFRRYGSVPHAGFGLGFERLVVYVCGLSNIRDAIPYPRAPGSAEF.

It belongs to the class-II aminoacyl-tRNA synthetase family. As to quaternary structure, homodimer.

It localises to the cytoplasm. It carries out the reaction tRNA(Asn) + L-asparagine + ATP = L-asparaginyl-tRNA(Asn) + AMP + diphosphate + H(+). The sequence is that of Asparagine--tRNA ligase from Xanthomonas campestris pv. campestris (strain 8004).